Here is a 193-residue protein sequence, read N- to C-terminus: Large ribosomal subunit protein uL5 (193 aa).

This sequence belongs to the universal ribosomal protein uL5 family. As to quaternary structure, part of the 50S ribosomal subunit; part of the 5S rRNA/L5/L18/L25 subcomplex. Contacts the 5S rRNA and the P site tRNA. Forms a bridge to the 30S subunit in the 70S ribosome.

Its function is as follows. This is one of the proteins that bind and probably mediate the attachment of the 5S RNA into the large ribosomal subunit, where it forms part of the central protuberance. In the 70S ribosome it contacts protein S13 of the 30S subunit (bridge B1b), connecting the 2 subunits; this bridge is implicated in subunit movement. Contacts the P site tRNA; the 5S rRNA and some of its associated proteins might help stabilize positioning of ribosome-bound tRNAs. The polypeptide is Large ribosomal subunit protein uL5 (Renibacterium salmoninarum (strain ATCC 33209 / DSM 20767 / JCM 11484 / NBRC 15589 / NCIMB 2235)).